Consider the following 365-residue polypeptide: Ribosomal RNA large subunit methyltransferase F (365 aa).

The disordered stretch occupies residues 1–50 (MSKPAVKSVPSATAKTATRAANPRQKAKAPKQAKPEGKGRAKPSKDKPRA). Positions 33-50 (AKPEGKGRAKPSKDKPRA) are enriched in basic and acidic residues.

Belongs to the methyltransferase superfamily. METTL16/RlmF family.

The protein resides in the cytoplasm. It carries out the reaction adenosine(1618) in 23S rRNA + S-adenosyl-L-methionine = N(6)-methyladenosine(1618) in 23S rRNA + S-adenosyl-L-homocysteine + H(+). Functionally, specifically methylates the adenine in position 1618 of 23S rRNA. This Shewanella baltica (strain OS195) protein is Ribosomal RNA large subunit methyltransferase F.